The primary structure comprises 120 residues: Adult-specific rigid cuticular protein 11.9 (120 aa).

In terms of domain architecture, Chitin-binding type R&amp;R spans Gly-9–Pro-87.

In terms of biological role, component of the rigid cuticle of the spider. In Araneus diadematus (European garden spider), this protein is Adult-specific rigid cuticular protein 11.9.